Here is a 109-residue protein sequence, read N- to C-terminus: Aquaporin-2 (109 aa).

The Cytoplasmic portion of the chain corresponds to 1–6 (SIAFSR). The helical transmembrane segment at 7 to 27 (AVFSEFLATLLFVFFGLGSAL) threads the bilayer. At 28-35 (NWPQALPS) the chain is on the extracellular side. Residues 36–54 (VLQIAMAFGLAIGTLVQTL) traverse the membrane as a helical segment. Over 55–59 (GHISG) the chain is Cytoplasmic. The segment at residues 60 to 69 (AHINPAVTVA) is an intramembrane region (discontinuously helical). Positions 63–65 (NPA) match the NPA 1 motif. Residues 70–80 (CLVGCHVSFLR) are Cytoplasmic-facing. Residues 81–102 (ATFYVAAQLLGAVAGAALLHEL) form a helical membrane-spanning segment. Residues 103–109 (TPPDIRG) are Extracellular-facing.

It belongs to the MIP/aquaporin (TC 1.A.8) family. In terms of assembly, homotetramer. In terms of processing, serine phosphorylation is necessary and sufficient for expression at the apical membrane. Endocytosis is not phosphorylation-dependent. Post-translationally, N-glycosylated.

The protein localises to the apical cell membrane. It is found in the basolateral cell membrane. Its subcellular location is the cell membrane. It localises to the cytoplasmic vesicle membrane. The protein resides in the golgi apparatus. The protein localises to the trans-Golgi network membrane. The catalysed reaction is H2O(in) = H2O(out). It carries out the reaction glycerol(in) = glycerol(out). Functionally, forms a water-specific channel that provides the plasma membranes of renal collecting duct with high permeability to water, thereby permitting water to move in the direction of an osmotic gradient. Plays an essential role in renal water homeostasis. Could also be permeable to glycerol. This Amblysomus hottentotus (Hottentot golden mole) protein is Aquaporin-2.